The sequence spans 106 residues: ATP-dependent Clp protease adapter protein ClpS (106 aa).

This sequence belongs to the ClpS family. Binds to the N-terminal domain of the chaperone ClpA.

In terms of biological role, involved in the modulation of the specificity of the ClpAP-mediated ATP-dependent protein degradation. The chain is ATP-dependent Clp protease adapter protein ClpS from Escherichia coli O139:H28 (strain E24377A / ETEC).